The chain runs to 192 residues: Elongation factor P (192 aa).

Belongs to the elongation factor P family.

It localises to the cytoplasm. It participates in protein biosynthesis; polypeptide chain elongation. In terms of biological role, involved in peptide bond synthesis. Stimulates efficient translation and peptide-bond synthesis on native or reconstituted 70S ribosomes in vitro. Probably functions indirectly by altering the affinity of the ribosome for aminoacyl-tRNA, thus increasing their reactivity as acceptors for peptidyl transferase. This Borrelia turicatae (strain 91E135) protein is Elongation factor P.